The sequence spans 271 residues: MTFIEKLSAVWQSQKTQLCIGLDPDLAKFPAHLKGKPDAILTFCKEIIDATADTACAFKPQIAYFAALRAEDQLEAICSYLRERYPHIPIVLDAKRGDIGATAEQYAREAFERYGADAVTVNPYMGFDSVQPYLERPDRGVIVLCRTSNAGGSDLQFLNVDGKPLYQHVAQLVADKWNTNGQCALVVGATFPNELAQVRALVGDMPLLIPGIGAQGGDIKATVEAGRTANGTGMMINSSRAILYAKADETFAQAARQVALETRDAINRYIA.

Catalysis depends on K95, which acts as the Proton donor.

Belongs to the OMP decarboxylase family. Type 2 subfamily.

The catalysed reaction is orotidine 5'-phosphate + H(+) = UMP + CO2. The protein operates within pyrimidine metabolism; UMP biosynthesis via de novo pathway; UMP from orotate: step 2/2. This is Orotidine 5'-phosphate decarboxylase from Janthinobacterium sp. (strain Marseille) (Minibacterium massiliensis).